We begin with the raw amino-acid sequence, 311 residues long: tRNA-cytidine(32) 2-sulfurtransferase (311 aa).

A PP-loop motif motif is present at residues 47–52 (SGGKDS). [4Fe-4S] cluster is bound by residues Cys-122, Cys-125, and Cys-213.

Belongs to the TtcA family. Homodimer. Mg(2+) serves as cofactor. It depends on [4Fe-4S] cluster as a cofactor.

The protein resides in the cytoplasm. The enzyme catalyses cytidine(32) in tRNA + S-sulfanyl-L-cysteinyl-[cysteine desulfurase] + AH2 + ATP = 2-thiocytidine(32) in tRNA + L-cysteinyl-[cysteine desulfurase] + A + AMP + diphosphate + H(+). The protein operates within tRNA modification. In terms of biological role, catalyzes the ATP-dependent 2-thiolation of cytidine in position 32 of tRNA, to form 2-thiocytidine (s(2)C32). The sulfur atoms are provided by the cysteine/cysteine desulfurase (IscS) system. The protein is tRNA-cytidine(32) 2-sulfurtransferase of Salmonella heidelberg (strain SL476).